The following is a 1892-amino-acid chain: Alpha-2-macroglobulin (1892 aa).

A signal peptide spans 1–23 (MKNIFRKFVFTIFVCLINLQLIA). Positions 1441–1444 (CTEQ) form a cross-link, isoglutamyl cysteine thioester (Cys-Gln).

The protein belongs to the protease inhibitor I39 (alpha-2-macroglobulin) family. Bacterial alpha-2-macroglobulin subfamily.

Functionally, protects the bacterial cell from host peptidases. The chain is Alpha-2-macroglobulin from Rickettsia conorii (strain ATCC VR-613 / Malish 7).